The chain runs to 841 residues: DNA mismatch repair protein MutS (841 aa).

Residue 600–607 (GPNMAGKS) coordinates ATP.

This sequence belongs to the DNA mismatch repair MutS family.

This protein is involved in the repair of mismatches in DNA. It is possible that it carries out the mismatch recognition step. This protein has a weak ATPase activity. In Carboxydothermus hydrogenoformans (strain ATCC BAA-161 / DSM 6008 / Z-2901), this protein is DNA mismatch repair protein MutS.